A 71-amino-acid chain; its full sequence is Exodeoxyribonuclease 7 small subunit (71 aa).

Belongs to the XseB family. Heterooligomer composed of large and small subunits.

Its subcellular location is the cytoplasm. The catalysed reaction is Exonucleolytic cleavage in either 5'- to 3'- or 3'- to 5'-direction to yield nucleoside 5'-phosphates.. In terms of biological role, bidirectionally degrades single-stranded DNA into large acid-insoluble oligonucleotides, which are then degraded further into small acid-soluble oligonucleotides. The protein is Exodeoxyribonuclease 7 small subunit of Clostridium botulinum (strain 657 / Type Ba4).